The sequence spans 502 residues: ATP synthase subunit alpha (502 aa).

169 to 176 contributes to the ATP binding site; sequence GDRQTGKT.

This sequence belongs to the ATPase alpha/beta chains family. As to quaternary structure, F-type ATPases have 2 components, CF(1) - the catalytic core - and CF(0) - the membrane proton channel. CF(1) has five subunits: alpha(3), beta(3), gamma(1), delta(1), epsilon(1). CF(0) has three main subunits: a(1), b(2) and c(9-12). The alpha and beta chains form an alternating ring which encloses part of the gamma chain. CF(1) is attached to CF(0) by a central stalk formed by the gamma and epsilon chains, while a peripheral stalk is formed by the delta and b chains.

It localises to the cell membrane. It carries out the reaction ATP + H2O + 4 H(+)(in) = ADP + phosphate + 5 H(+)(out). Produces ATP from ADP in the presence of a proton gradient across the membrane. The alpha chain is a regulatory subunit. The polypeptide is ATP synthase subunit alpha (Staphylococcus aureus (strain bovine RF122 / ET3-1)).